The primary structure comprises 185 residues: NEDD8-conjugating enzyme UBE2F (185 aa).

Residues 1–29 (MLTLASKLKRDDGVRGPRASNPASDSTRR) are interaction with UBA3. The disordered stretch occupies residues 11 to 30 (DDGVRGPRASNPASDSTRRV). Positions 32–185 (VRDKLLVKEV…VEDYIKRYAR (154 aa)) constitute a UBC core domain. Cys116 acts as the Glycyl thioester intermediate in catalysis.

This sequence belongs to the ubiquitin-conjugating enzyme family. UBE2F subfamily.

It catalyses the reaction [E1 NEDD8-activating enzyme]-S-[NEDD8 protein]-yl-L-cysteine + [E2 NEDD8-conjugating enzyme]-L-cysteine = [E1 NEDD8-activating enzyme]-L-cysteine + [E2 NEDD8-conjugating enzyme]-S-[NEDD8-protein]-yl-L-cysteine.. It participates in protein modification; protein neddylation. In terms of biological role, accepts the ubiquitin-like protein NEDD8 from the UBA3-NAE1 E1 complex and catalyzes its covalent attachment to other proteins. Together with the E3 ubiquitin ligase RNF7/RBX2, specifically neddylates cullin-5 (CUL5). Does not neddylate CUL1, CUL2, CUL3, CUL4A or CUL4B. This is NEDD8-conjugating enzyme UBE2F (UBE2F) from Gallus gallus (Chicken).